Here is a 237-residue protein sequence, read N- to C-terminus: Ribosomal RNA small subunit methyltransferase G (237 aa).

Residues Gly-78, Phe-83, 129–130 (AE), and Arg-148 contribute to the S-adenosyl-L-methionine site.

This sequence belongs to the methyltransferase superfamily. RNA methyltransferase RsmG family.

Its subcellular location is the cytoplasm. Specifically methylates the N7 position of a guanine in 16S rRNA. The sequence is that of Ribosomal RNA small subunit methyltransferase G from Streptococcus thermophilus (strain ATCC BAA-491 / LMD-9).